The following is a 127-amino-acid chain: Holo-[acyl-carrier-protein] synthase (127 aa).

Mg(2+)-binding residues include aspartate 8 and glutamate 57.

It belongs to the P-Pant transferase superfamily. AcpS family. Mg(2+) serves as cofactor.

The protein resides in the cytoplasm. It carries out the reaction apo-[ACP] + CoA = holo-[ACP] + adenosine 3',5'-bisphosphate + H(+). In terms of biological role, transfers the 4'-phosphopantetheine moiety from coenzyme A to a Ser of acyl-carrier-protein. This chain is Holo-[acyl-carrier-protein] synthase, found in Ruthia magnifica subsp. Calyptogena magnifica.